The chain runs to 105 residues: MANWDGKYISPYVEHGKKSEQVKKITVSIPIKVLEILTNERTRRQIKNLRHATNSELLCEAFLHAFTGQPLPTDSDLLKERHDEIPEYAKQIMRESGVDPEEWEY.

It belongs to the MetJ family. As to quaternary structure, homodimer.

It localises to the cytoplasm. Functionally, this regulatory protein, when combined with SAM (S-adenosylmethionine) represses the expression of the methionine regulon and of enzymes involved in SAM synthesis. This Actinobacillus succinogenes (strain ATCC 55618 / DSM 22257 / CCUG 43843 / 130Z) protein is Met repressor.